Here is a 356-residue protein sequence, read N- to C-terminus: NADH-quinone oxidoreductase subunit H (356 aa).

9 helical membrane passes run 16–36, 52–72, 85–105, 117–137, 163–183, 201–221, 254–274, 295–315, and 334–354; these read IAVL…AFLL, PNVV…KFVF, LYLL…AVVP, VGIL…IIGG, IGFI…SEII, WPMP…ISAL, FMVG…ILFF, AWYF…FAMV, and IFLP…VYGP.

Belongs to the complex I subunit 1 family. As to quaternary structure, NDH-1 is composed of 14 different subunits. Subunits NuoA, H, J, K, L, M, N constitute the membrane sector of the complex.

It localises to the cell inner membrane. It catalyses the reaction a quinone + NADH + 5 H(+)(in) = a quinol + NAD(+) + 4 H(+)(out). In terms of biological role, NDH-1 shuttles electrons from NADH, via FMN and iron-sulfur (Fe-S) centers, to quinones in the respiratory chain. The immediate electron acceptor for the enzyme in this species is believed to be ubiquinone. Couples the redox reaction to proton translocation (for every two electrons transferred, four hydrogen ions are translocated across the cytoplasmic membrane), and thus conserves the redox energy in a proton gradient. This subunit may bind ubiquinone. This is NADH-quinone oxidoreductase subunit H from Maricaulis maris (strain MCS10) (Caulobacter maris).